A 657-amino-acid polypeptide reads, in one-letter code: Endoplasmic reticulum chaperone BiP homolog (657 aa).

The N-terminal stretch at 1 to 17 (MKVFSLILIAFVANAYC) is a signal peptide. Residues 38–41 (GTTY), Lys99, 229–231 (GGT), 295–302 (EKAKRALS), and 366–369 (GSTR) contribute to the ATP site. Residues 128–282 (KPNVEVKVGS…KKKSGKDLRK (155 aa)) form a nucleotide-binding (NBD) region. Residues 402 to 502 (VQAGVIGGVE…PRGVPQIEVT (101 aa)) form a substrate-binding (SBD) region. The disordered stretch occupies residues 607 to 657 (LGSNQDASTEENKEQKKELESVVQPIVSKLYSAGGQGEQASEEPSEDHDEL). A compositionally biased stretch (basic and acidic residues) spans 616–626 (EENKEQKKELE). Residues 646–657 (ASEEPSEDHDEL) show a composition bias toward acidic residues. The Prevents secretion from ER signature appears at 654–657 (HDEL).

This sequence belongs to the heat shock protein 70 family.

The protein resides in the endoplasmic reticulum lumen. It carries out the reaction ATP + H2O = ADP + phosphate + H(+). The chaperone activity is regulated by ATP-induced allosteric coupling of the nucleotide-binding (NBD) and substrate-binding (SBD) domains. In the ADP-bound and nucleotide-free (apo) states, the two domains have little interaction. In contrast, in the ATP-bound state the two domains are tightly coupled, which results in drastically accelerated kinetics in both binding and release of polypeptide substrates. J domain-containing co-chaperones stimulate the ATPase activity and are required for efficient substrate recognition. Functionally, endoplasmic reticulum chaperone that plays a key role in protein folding and quality control in the endoplasmic reticulum lumen. Required for ER dynamics during the first embryonic cell divisions. Specifically, controls ER transition into sheet-like structures at the onset of mitosis, possibly by regulating homotypic membrane fusion. The polypeptide is Endoplasmic reticulum chaperone BiP homolog (hsp-4) (Caenorhabditis elegans).